Consider the following 261-residue polypeptide: Putative quercetin 2,3-dioxygenase Ta0133 (261 aa).

Histidine 17, histidine 19, histidine 61, and glutamate 63 together coordinate a divalent metal cation.

This sequence belongs to the pirin family. A divalent metal cation is required as a cofactor.

The enzyme catalyses quercetin + O2 = 2-(3,4-dihydroxybenzoyloxy)-4,6-dihydroxybenzoate + CO. The protein operates within flavonoid metabolism; quercetin degradation. Its function is as follows. Putative quercetin 2,3-dioxygenase. This is Putative quercetin 2,3-dioxygenase Ta0133 from Thermoplasma acidophilum (strain ATCC 25905 / DSM 1728 / JCM 9062 / NBRC 15155 / AMRC-C165).